We begin with the raw amino-acid sequence, 84 residues long: Large ribosomal subunit protein uL23 (84 aa).

This sequence belongs to the universal ribosomal protein uL23 family. Part of the 50S ribosomal subunit. Contacts protein L29.

Binds to 23S rRNA. One of the proteins that surrounds the polypeptide exit tunnel on the outside of the ribosome. This Thermoplasma acidophilum (strain ATCC 25905 / DSM 1728 / JCM 9062 / NBRC 15155 / AMRC-C165) protein is Large ribosomal subunit protein uL23.